We begin with the raw amino-acid sequence, 416 residues long: Serine hydroxymethyltransferase 1 (416 aa).

Residues Leu121 and 125–127 (GHL) contribute to the (6S)-5,6,7,8-tetrahydrofolate site. The residue at position 229 (Lys229) is an N6-(pyridoxal phosphate)lysine. (6S)-5,6,7,8-tetrahydrofolate-binding positions include Glu245 and 354–356 (SPF).

This sequence belongs to the SHMT family. Homodimer. Pyridoxal 5'-phosphate serves as cofactor.

The protein resides in the cytoplasm. It catalyses the reaction (6R)-5,10-methylene-5,6,7,8-tetrahydrofolate + glycine + H2O = (6S)-5,6,7,8-tetrahydrofolate + L-serine. The protein operates within one-carbon metabolism; tetrahydrofolate interconversion. Its pathway is amino-acid biosynthesis; glycine biosynthesis; glycine from L-serine: step 1/1. In terms of biological role, catalyzes the reversible interconversion of serine and glycine with tetrahydrofolate (THF) serving as the one-carbon carrier. This reaction serves as the major source of one-carbon groups required for the biosynthesis of purines, thymidylate, methionine, and other important biomolecules. Also exhibits THF-independent aldolase activity toward beta-hydroxyamino acids, producing glycine and aldehydes, via a retro-aldol mechanism. This chain is Serine hydroxymethyltransferase 1, found in Vibrio cholerae serotype O1 (strain ATCC 39315 / El Tor Inaba N16961).